The primary structure comprises 652 residues: MSEPLLHLTGISRSFTAGDREFLALKHIDLSIQAGEMVAITGASGSGKSTLMNILGCLDYATAGSYKVNGRETRDLDDQALAELRRDYFGFIFQRYHLLPHLSAMHNVEMPAIYAGTPQVRRHGRARELLARLGLSGHLGHRPSQLSGGQQQRVSIARALMNGGEVILADEPTGALDTASGKEVMNILQELHGLGHTVIIVTHDPKVAANAQRIIEVRDGEIVSDRANPRPADEAPSEPPVSVRPAGARRLVASLGLFKEAFVMAWVALVSHRMRTLLTMLGIVIGITSVVSIVAIGEGAKRYVLKDIQAIGSNTIDIFPGASFGDSRAAAIQTLMPADVTALNQLYYVDSATPMVGRSLLLRYGNIDLNATVNGVSHLYFQVRDIKLASGISFSENDARRQAQVVVIDHNTRNRLFGPDVDPLGQVILVGNLPCTVIGVTRENKNMFAASNLLNVWLPYETAAGRVLGQRHLDSISVRIKDGQPSKVVEEHVKKLMEQRHGTKDFFTNNLDSIMQTVQRTSRSLALLLSLIAVISLVVGGIGVMNIMLVSVTERTREIGIRMAVGARQSDIRQQFLVEAVMVCLIGGAIGISLSFAIGYLFTLFIKEWEMVFSMGSIITAFACSTLIGIVFGFVPARNAARLDPIEALARD.

The region spanning leucine 6–arginine 244 is the ABC transporter domain. ATP is bound at residue glycine 42–serine 49. 5 helical membrane-spanning segments follow: residues leucine 251–serine 271, leucine 277–glycine 297, leucine 525–methionine 545, isoleucine 586–isoleucine 606, and methionine 615–valine 635.

Belongs to the ABC transporter superfamily. Macrolide exporter (TC 3.A.1.122) family. As to quaternary structure, probably part of a tripartite efflux system, which is composed of an inner membrane transporter, a periplasmic membrane fusion protein, and an outer membrane component.

It localises to the cell inner membrane. Functionally, probably part of a tripartite efflux system. In Pseudomonas fluorescens (strain ATCC BAA-477 / NRRL B-23932 / Pf-5), this protein is Probable export ATP-binding/permease protein PFL_2149.